Here is a 130-residue protein sequence, read N- to C-terminus: Large ribosomal subunit protein bL20c (130 aa).

Belongs to the bacterial ribosomal protein bL20 family.

The protein localises to the plastid. It is found in the chloroplast. Its function is as follows. Binds directly to 23S ribosomal RNA and is necessary for the in vitro assembly process of the 50S ribosomal subunit. It is not involved in the protein synthesizing functions of that subunit. The sequence is that of Large ribosomal subunit protein bL20c from Fagopyrum esculentum subsp. ancestrale (Wild buckwheat).